Reading from the N-terminus, the 157-residue chain is SsrA-binding protein (157 aa).

The disordered stretch occupies residues 133–157; the sequence is LHDKRETEKKRDWSREKSRLLRARG. Over residues 135–151 the composition is skewed to basic and acidic residues; that stretch reads DKRETEKKRDWSREKSR.

Belongs to the SmpB family.

Its subcellular location is the cytoplasm. Required for rescue of stalled ribosomes mediated by trans-translation. Binds to transfer-messenger RNA (tmRNA), required for stable association of tmRNA with ribosomes. tmRNA and SmpB together mimic tRNA shape, replacing the anticodon stem-loop with SmpB. tmRNA is encoded by the ssrA gene; the 2 termini fold to resemble tRNA(Ala) and it encodes a 'tag peptide', a short internal open reading frame. During trans-translation Ala-aminoacylated tmRNA acts like a tRNA, entering the A-site of stalled ribosomes, displacing the stalled mRNA. The ribosome then switches to translate the ORF on the tmRNA; the nascent peptide is terminated with the 'tag peptide' encoded by the tmRNA and targeted for degradation. The ribosome is freed to recommence translation, which seems to be the essential function of trans-translation. The protein is SsrA-binding protein of Afipia carboxidovorans (strain ATCC 49405 / DSM 1227 / KCTC 32145 / OM5) (Oligotropha carboxidovorans).